Here is a 245-residue protein sequence, read N- to C-terminus: DNA polymerase sliding clamp 1 (245 aa).

It belongs to the PCNA family. As to quaternary structure, the subunits circularize to form a toroid; DNA passes through its center. Replication factor C (RFC) is required to load the toroid on the DNA. Forms a dimeric complex with PCNA3 and a trimeric complex with PCNA2 and PCNA3; does not form homotrimers.

Functionally, sliding clamp subunit that acts as a moving platform for DNA processing. Responsible for tethering the catalytic subunit of DNA polymerase and other proteins to DNA during high-speed replication. The trimeric complex inhibits DNA ligase and both 3'-5' and 5'-3' activity of Hel308 (Hjm) helicase, but stimulates Hjc, the Holliday junction cleavage enzyme. This chain is DNA polymerase sliding clamp 1, found in Sulfurisphaera tokodaii (strain DSM 16993 / JCM 10545 / NBRC 100140 / 7) (Sulfolobus tokodaii).